Here is a 225-residue protein sequence, read N- to C-terminus: Small ribosomal subunit protein uS3 (225 aa).

Residues 38 to 106 (LRKFLQGKLQ…EVSLNIVEIR (69 aa)) enclose the KH type-2 domain.

Belongs to the universal ribosomal protein uS3 family. In terms of assembly, part of the 30S ribosomal subunit. Forms a tight complex with proteins S10 and S14.

In terms of biological role, binds the lower part of the 30S subunit head. Binds mRNA in the 70S ribosome, positioning it for translation. The polypeptide is Small ribosomal subunit protein uS3 (Rhodospirillum centenum (strain ATCC 51521 / SW)).